A 363-amino-acid chain; its full sequence is MQLPISQYNELLQKKLEKLTALLRPFNAPDIQVFDSPTSHYRMRAEFRIWHEQDDFYHIMFDQATLQRYRVDEFPIASTQINRMMQTLLPLLKQQEVLHKKLFQIDYLSTLSNKIIVSLLYHKTLTEEWESAAKNLKDLLEKQGFNVQIIGRASKQKICFEQDYVDEVLPVNGRNYVYRQVENSFTQPNATVNCKMLEWAIDCTQNSEGDLLELYCGNGNFSIALAQNFRKVLATEIAKPSVAAAQFNIAENKVDNLQIIRMSAEEFTQAMNGVRAFNRLKGIDLKSYECNTIFVDPPRAGLDPDTVKLVQNYDRILYISCNPHTLCDNLVELSKTHRIEKAALFDQFPYTDHMESGVWLIRK.

Residues Q187, Y215, N220, E236, and D296 each coordinate S-adenosyl-L-methionine. C321 functions as the Nucleophile in the catalytic mechanism. E355 (proton acceptor) is an active-site residue.

The protein belongs to the class I-like SAM-binding methyltransferase superfamily. RNA M5U methyltransferase family. TrmA subfamily.

The catalysed reaction is uridine(54) in tRNA + S-adenosyl-L-methionine = 5-methyluridine(54) in tRNA + S-adenosyl-L-homocysteine + H(+). The enzyme catalyses uridine(341) in tmRNA + S-adenosyl-L-methionine = 5-methyluridine(341) in tmRNA + S-adenosyl-L-homocysteine + H(+). Dual-specificity methyltransferase that catalyzes the formation of 5-methyluridine at position 54 (m5U54) in all tRNAs, and that of position 341 (m5U341) in tmRNA (transfer-mRNA). In Haemophilus influenzae (strain PittEE), this protein is tRNA/tmRNA (uracil-C(5))-methyltransferase.